Reading from the N-terminus, the 574-residue chain is Isocitrate dehydrogenase kinase/phosphatase (574 aa).

Residues 315 to 321 (APGIRGM) and Lys336 each bind ATP. The active site involves Asp371.

The protein belongs to the AceK family.

It is found in the cytoplasm. It catalyses the reaction L-seryl-[isocitrate dehydrogenase] + ATP = O-phospho-L-seryl-[isocitrate dehydrogenase] + ADP + H(+). Its function is as follows. Bifunctional enzyme which can phosphorylate or dephosphorylate isocitrate dehydrogenase (IDH) on a specific serine residue. This is a regulatory mechanism which enables bacteria to bypass the Krebs cycle via the glyoxylate shunt in response to the source of carbon. When bacteria are grown on glucose, IDH is fully active and unphosphorylated, but when grown on acetate or ethanol, the activity of IDH declines drastically concomitant with its phosphorylation. The sequence is that of Isocitrate dehydrogenase kinase/phosphatase from Escherichia coli O127:H6 (strain E2348/69 / EPEC).